A 63-amino-acid chain; its full sequence is 2-hydroxymuconate tautomerase (63 aa).

The active-site Proton acceptor; via imino nitrogen is the Pro2.

This sequence belongs to the 4-oxalocrotonate tautomerase family. As to quaternary structure, homohexamer.

The catalysed reaction is (2Z,4E)-2-hydroxyhexa-2,4-dienedioate = (3E)-2-oxohex-3-enedioate. Its pathway is aromatic compound metabolism; salicylate degradation. Its function is as follows. Catalyzes the ketonization of 2-hydroxymuconate stereoselectively to yield 2-oxo-3-hexenedioate. This is 2-hydroxymuconate tautomerase (nahJ) from Pseudomonas putida (Arthrobacter siderocapsulatus).